The chain runs to 218 residues: Glutathione S-transferase Mu 5 (218 aa).

Residues 2–88 form the GST N-terminal domain; that stretch reads PMTLGYWDIR…YIARKHNLCG (87 aa). Glutathione-binding positions include 7-8, 46-50, 59-60, and 72-73; these read YW, WLNEK, NL, and QS. In terms of domain architecture, GST C-terminal spans 90–207; sequence TEEEKIRVDI…MKSSQFLRGL (118 aa). A substrate-binding site is contributed by Y116.

This sequence belongs to the GST superfamily. Mu family. Homodimer.

It localises to the cytoplasm. It carries out the reaction RX + glutathione = an S-substituted glutathione + a halide anion + H(+). Conjugation of reduced glutathione to a wide number of exogenous and endogenous hydrophobic electrophiles. The protein is Glutathione S-transferase Mu 5 (GSTM5) of Homo sapiens (Human).